The primary structure comprises 322 residues: NADH-quinone oxidoreductase subunit H (322 aa).

A run of 8 helical transmembrane segments spans residues 15–35 (IFQS…MSVV), 81–101 (ITFL…ITII), 114–134 (IGVL…LLAG), 149–169 (ATAQ…GVVA), 184–204 (IGLW…IAGL), 237–257 (FFIG…TMFF), 265–285 (FPSY…FILI), and 299–319 (LFGW…TALI).

Belongs to the complex I subunit 1 family. As to quaternary structure, NDH-1 is composed of 13 different subunits. Subunits NuoA, H, J, K, L, M, N constitute the membrane sector of the complex.

The protein localises to the cell membrane. The enzyme catalyses a quinone + NADH + 5 H(+)(in) = a quinol + NAD(+) + 4 H(+)(out). Functionally, NDH-1 shuttles electrons from NADH, via FMN and iron-sulfur (Fe-S) centers, to quinones in the respiratory chain. The immediate electron acceptor for the enzyme in this species is believed to be ubiquinone. Couples the redox reaction to proton translocation (for every two electrons transferred, four hydrogen ions are translocated across the cytoplasmic membrane), and thus conserves the redox energy in a proton gradient. This subunit may bind ubiquinone. The chain is NADH-quinone oxidoreductase subunit H from Buchnera aphidicola subsp. Baizongia pistaciae (strain Bp).